The following is a 671-amino-acid chain: Receptor-interacting serine/threonine-protein kinase 1 (671 aa).

Phosphoserine; by IKKA and IKKB is present on serine 6. One can recognise a Protein kinase domain in the interval 17 to 289 (FLESAELDSG…GIEEKFRPFY (273 aa)). Serine 20 bears the Phosphoserine; by autocatalysis mark. Residues 23–31 (LDSGGFGKV) and lysine 45 each bind ATP. Serine 25 carries the post-translational modification Phosphoserine; by IKKA and IKKB. The active-site Proton acceptor is the aspartate 138. A Phosphoserine; by RIPK3 and autocatalysis modification is found at serine 161. Serine 166 is modified (phosphoserine; by autocatalysis). Residues 290-582 (LSQLEESVEE…QAIFDNTTSL (293 aa)) form an interaction with SQSTM1 region. Phosphoserine is present on serine 303. 3 positions are modified to phosphoserine; by MAP3K7: serine 320, serine 331, and serine 333. Positions 331-348 (SRSNSATEQPGSLHSSQG) are enriched in polar residues. Residues 331-354 (SRSNSATEQPGSLHSSQGLGMGPV) form a disordered region. Residue lysine 377 forms a Glycyl lysine isopeptide (Lys-Gly) (interchain with G-Cter in ubiquitin) linkage. Tyrosine 384 carries the post-translational modification Phosphotyrosine. The tract at residues 389–455 (SRMDRQTKQQ…GNAVHQPSGL (67 aa)) is disordered. The span at 428–444 (NFQNTEGKGTAYSSAAS) shows a compositional bias: polar residues. Positions 531–547 (YTIYNSTGIQIGAYNYM) match the RIP homotypic interaction motif (RHIM) motif. Residues 583–669 (TDKHLDPIRE…DLLSSLIYVS (87 aa)) enclose the Death domain. The (Microbial infection) N-beta-linked (GlcNAc) arginine glycan is linked to arginine 603.

The protein belongs to the protein kinase superfamily. TKL Ser/Thr protein kinase family. Homodimer. Interacts (via RIP homotypic interaction motif) with RIPK3 (via RIP homotypic interaction motif); this interaction induces RIPK1 phosphorylation and formation of a RIPK1-RIPK3 necroptosis-inducing complex. Upon TNF-induced necrosis, the RIPK1-RIPK3 dimer further interacts with PGAM5 and MLKL; the formation of this complex leads to PGAM5 phosphorylation and increase in PGAM5 phosphatase activity. Interacts (via the death domain) with TNFRSF6 (via the death domain) and TRADD (via the death domain). Is recruited by TRADD to TNFRSF1A in a TNF-dependent process. Binds RNF216, EGFR, IKBKG, TRAF1, TRAF2 and TRAF3. Interacts with BNLF1. Interacts with SQSTM1 upon TNF-alpha stimulation. May interact with MAVS/IPS1. Interacts with ZFAND5. Interacts with RBCK1. Interacts with ZBP1. Interacts with BIRC2/c-IAP1, BIRC3/c-IAP2 and XIAP/BIRC4. Interacts (via kinase domain) with DAB2IP (via Ras-GAP domain); the interaction occurs in a TNF-alpha-dependent manner. Interacts with ARHGEF2. Interacts (via protein kinase domain) with RFFL; involved in RIPK1 ubiquitination. Interacts with RNF34; involved in RIPK1 ubiquitination. Interacts with TICAM1 and this interaction is enhanced in the presence of WDFY1. Interacts with PELI1. Interacts (via death domain) with CRADD (via death domain); the interaction is direct. Component of complex IIa composed of at least RIPK1, FADD and CASP8. Component of the AIM2 PANoptosome complex, a multiprotein complex that drives inflammatory cell death (PANoptosis). Interacts with MAP3K7, CFLAR, CASP8, FADD and NEMO. Interacts with TAX1BP1; this interaction negatively regulates RIPK1 ubiquitination. Interacts with GRB2. Interacts with DDX24; this interaction disrupts RLR signaling activation of IFN-dependent transcription factor IRF7. As to quaternary structure, (Microbial infection) Interacts with mumps virus protein SH; this interaction inhibits downstream NF-kappa-B pathway activation. In terms of assembly, (Microbial infection) Interacts with Murid herpesvirus 1 protein RIR1. (Microbial infection) Interacts (via RIP homotypic interaction motif) with herpes simplex virus 1/HHV-1 protein RIR1/ICP6 (via RIP homotypic interaction motif); this interaction prevents necroptosis activation. As to quaternary structure, (Microbial infection) Interacts (via RIP homotypic interaction motif) with herpes simplex virus 2/HHV-2 protein RIR1/ICP10 (via RIP homotypic interaction motif); this interaction prevents necroptosis activation. (Microbial infection) Proteolytically cleaved by S.flexneri OspD3 within the RIP homotypic interaction motif (RHIM), leading to its degradation and inhibition of necroptosis. In terms of processing, proteolytically cleaved by CASP8 at Asp-324. Cleavage is crucial for limiting TNF-induced apoptosis, necroptosis and inflammatory response. Cleavage abolishes NF-kappa-B activation and enhances the interaction of TRADD with FADD. Proteolytically cleaved by CASP6 during intrinsic apoptosis. Post-translationally, RIPK1 and RIPK3 undergo reciprocal auto- and trans-phosphorylation. Phosphorylation of Ser-161 by RIPK3 is necessary for the formation of the necroptosis-inducing complex. Phosphorylation at Ser-25 represses its kinase activity and consequently prevents TNF-mediated RIPK1-dependent cell death. Phosphorylated at Ser-320 by MAP3K7 which requires prior ubiquitination with 'Lys-63'-linked chains by BIRC2/c-IAP1 and BIRC3/c-IAP2. This phosphorylation positively regulates RIPK1 interaction with RIPK3 to promote necroptosis but negatively regulates RIPK1 kinase activity and its interaction with FADD to mediate apoptosis. Deubiquitinated by USP7; this modification is required for TNF-alpha-induced apoptosis. In terms of processing, ubiquitinated with 'Lys-11'-, 'Lys-48'-, 'Lys-63'- and linear-linked type ubiquitin. Polyubiquitination with 'Lys-63'-linked chains by TRAF2 induces association with the IKK complex. Deubiquitination of 'Lys-63'-linked chains and polyubiquitination with 'Lys-48'-linked chains by TNFAIP3 leads to RIPK1 proteasomal degradation and consequently down-regulates TNF-alpha-induced NF-kappa-B signaling. 'Lys-48'-linked polyubiquitination by RFFL or RNF34 also promotes proteasomal degradation and negatively regulates TNF-alpha-induced NF-kappa-B signaling. Linear polyubiquitinated; the head-to-tail linear polyubiquitination ('Met-1'-linked) is mediated by the LUBAC complex and decreases protein kinase activity. Deubiquitination of linear polyubiquitin by CYLD promotes the kinase activity. Polyubiquitinated with 'Lys-48' and 'Lys-63'-linked chains by BIRC2/c-IAP1 and BIRC3/c-IAP2, leading to activation of NF-kappa-B. Ubiquitinated with 'Lys-63'-linked chains by PELI1. Ubiquitination at Lys-377 with 'Lys-63'-linked chains by BIRC2/c-IAP1 and BIRC3/c-IAP2 is essential for its phosphorylation at Ser-320 mediated by MAP3K7. This ubiquitination is required for NF-kB activation, suppresses RIPK1 kinase activity and plays a critical role in preventing cell death during embryonic development. Post-translationally, (Microbial infection) Glycosylated at Arg-603 by enteropathogenic E.coli protein NleB1: arginine GlcNAcylation prevents homotypic/heterotypic death domain interactions.

It localises to the cytoplasm. Its subcellular location is the cell membrane. It carries out the reaction L-seryl-[protein] + ATP = O-phospho-L-seryl-[protein] + ADP + H(+). The enzyme catalyses L-threonyl-[protein] + ATP = O-phospho-L-threonyl-[protein] + ADP + H(+). Serine-threonine kinase activity is inhibited by linear polyubiquitination ('Met-1'-linked) by the LUBAC complex. Inhibited by necrostatins, including necrostatin-1, necrostatin-3 and necrostatin-4. Its function is as follows. Serine-threonine kinase which is a key regulator of TNF-mediated apoptosis, necroptosis and inflammatory pathways. Exhibits kinase activity-dependent functions that regulate cell death and kinase-independent scaffold functions regulating inflammatory signaling and cell survival. Has kinase-independent scaffold functions: upon binding of TNF to TNFR1, RIPK1 is recruited to the TNF-R1 signaling complex (TNF-RSC also known as complex I) where it acts as a scaffold protein promoting cell survival, in part, by activating the canonical NF-kappa-B pathway. Kinase activity is essential to regulate necroptosis and apoptosis, two parallel forms of cell death: upon activation of its protein kinase activity, regulates assembly of two death-inducing complexes, namely complex IIa (RIPK1-FADD-CASP8), which drives apoptosis, and the complex IIb (RIPK1-RIPK3-MLKL), which drives necroptosis. RIPK1 is required to limit CASP8-dependent TNFR1-induced apoptosis. In normal conditions, RIPK1 acts as an inhibitor of RIPK3-dependent necroptosis, a process mediated by RIPK3 component of complex IIb, which catalyzes phosphorylation of MLKL upon induction by ZBP1. Inhibits RIPK3-mediated necroptosis via FADD-mediated recruitment of CASP8, which cleaves RIPK1 and limits TNF-induced necroptosis. Required to inhibit apoptosis and necroptosis during embryonic development: acts by preventing the interaction of TRADD with FADD thereby limiting aberrant activation of CASP8. In addition to apoptosis and necroptosis, also involved in inflammatory response by promoting transcriptional production of pro-inflammatory cytokines, such as interleukin-6 (IL6). Phosphorylates RIPK3: RIPK1 and RIPK3 undergo reciprocal auto- and trans-phosphorylation. Phosphorylates DAB2IP at 'Ser-728' in a TNF-alpha-dependent manner, and thereby activates the MAP3K5-JNK apoptotic cascade. Required for ZBP1-induced NF-kappa-B activation in response to DNA damage. The protein is Receptor-interacting serine/threonine-protein kinase 1 of Homo sapiens (Human).